The primary structure comprises 227 residues: Probable FKBP-type 25 kDa peptidyl-prolyl cis-trans isomerase (227 aa).

The PPIase FKBP-type domain occupies 144–227 (ATQVHVRYRG…VFEIDLLGFR (84 aa)).

The protein belongs to the FKBP-type PPIase family.

It catalyses the reaction [protein]-peptidylproline (omega=180) = [protein]-peptidylproline (omega=0). In terms of biological role, PPIases accelerate the folding of proteins. The chain is Probable FKBP-type 25 kDa peptidyl-prolyl cis-trans isomerase (fkl) from Pseudomonas aeruginosa (strain ATCC 15692 / DSM 22644 / CIP 104116 / JCM 14847 / LMG 12228 / 1C / PRS 101 / PAO1).